A 417-amino-acid polypeptide reads, in one-letter code: MSLSNKLTLDKVDVKGKRVVMRVDFNVPMKDHKITNNQRIKAAVPTIKHCLDHGAKSVVLMSHLGRPDGVPMPDKFSFSPVAVELKALLGREVSFLKDCVGPEVEKACANPANGSVILLENLRFHVEEEGKGKDASGNKIKADAAKVEAFRASLSKLGDVYVNDAFGTAHRAHSSMVGVHLPQKAAGFLMKKELDYFAKALESPERPFLAILGGAKVQDKIQLISNMLDKVNEMIIGGGMAFTFLKVLNNMQIGNSLFDEEGSKIVKDLMAKAEKNGVKITLPVDFITADKFDEHAQTGEATVASGIPAGWMGLDCGPESVKKFVEVVGRAKQIVWNGPVGVFEWDKFSKGTKALMDKVVEVTGKGCITIIGGGDTATCCAKWNTEDKVSHVSTGGGASLELLEGKVLPGVDALSSV.

(2R)-3-phosphoglycerate is bound by residues Val23, Asp24, Phe25, Asn26, Gln38, Arg39, Ser62, His63, Gly65, Arg66, Leu122, Arg123, His170, and Arg171. Gly214 is a binding site for ADP. Position 214 (Gly214) interacts with CDP. AMP-binding residues include Ala215 and Lys216. Ala215 serves as a coordination point for ATP. A Mg(2+)-binding site is contributed by Ala215. Asp219 lines the CDP pocket. Asp219 provides a ligand contact to Mg(2+). Residue Lys220 coordinates AMP. Lys220 is an ATP binding site. Gly238 serves as a coordination point for ADP. Residue Gly238 coordinates CDP. Gly239 and Gly313 together coordinate AMP. Positions 239 and 313 each coordinate ATP. Residues Gly338, Val340, and Phe343 each coordinate CDP. Phe343 lines the ADP pocket. Position 344 (Glu344) interacts with AMP. Positions 344, 375, and 376 each coordinate ATP. Asp375 provides a ligand contact to Mg(2+).

It belongs to the phosphoglycerate kinase family. In terms of assembly, monomer. It depends on Mg(2+) as a cofactor.

It is found in the cytoplasm. The enzyme catalyses (2R)-3-phosphoglycerate + ATP = (2R)-3-phospho-glyceroyl phosphate + ADP. It functions in the pathway carbohydrate degradation; glycolysis; pyruvate from D-glyceraldehyde 3-phosphate: step 2/5. In terms of biological role, catalyzes one of the two ATP producing reactions in the glycolytic pathway via the reversible conversion of 1,3-diphosphoglycerate to 3-phosphoglycerate. In addition to its role as a glycolytic enzyme, it seems that PGK-1 acts as a polymerase alpha cofactor protein (primer recognition protein). May play a role in sperm motility. This is Phosphoglycerate kinase (PGK) from Gallus gallus (Chicken).